We begin with the raw amino-acid sequence, 63 residues long: Large ribosomal subunit protein bL28 (63 aa).

Belongs to the bacterial ribosomal protein bL28 family.

The chain is Large ribosomal subunit protein bL28 (rpmB) from Selenomonas ruminantium.